The sequence spans 495 residues: UDP-N-acetylmuramoyl-L-alanyl-D-glutamate--2,6-diaminopimelate ligase (495 aa).

UDP-N-acetyl-alpha-D-muramoyl-L-alanyl-D-glutamate contacts are provided by residues leucine 27, serine 29, and 44 to 46 (HQA). Residue 116–122 (GTNGKTT) coordinates ATP. UDP-N-acetyl-alpha-D-muramoyl-L-alanyl-D-glutamate contacts are provided by residues asparagine 157, 158-159 (TT), serine 185, glutamine 191, and arginine 193. Residue lysine 225 is modified to N6-carboxylysine. Residues arginine 390, 414–417 (DNPR), glycine 465, and glutamate 469 contribute to the meso-2,6-diaminopimelate site. The Meso-diaminopimelate recognition motif signature appears at 414–417 (DNPR).

The protein belongs to the MurCDEF family. MurE subfamily. It depends on Mg(2+) as a cofactor. Post-translationally, carboxylation is probably crucial for Mg(2+) binding and, consequently, for the gamma-phosphate positioning of ATP.

It localises to the cytoplasm. It catalyses the reaction UDP-N-acetyl-alpha-D-muramoyl-L-alanyl-D-glutamate + meso-2,6-diaminopimelate + ATP = UDP-N-acetyl-alpha-D-muramoyl-L-alanyl-gamma-D-glutamyl-meso-2,6-diaminopimelate + ADP + phosphate + H(+). It functions in the pathway cell wall biogenesis; peptidoglycan biosynthesis. Its function is as follows. Catalyzes the addition of meso-diaminopimelic acid to the nucleotide precursor UDP-N-acetylmuramoyl-L-alanyl-D-glutamate (UMAG) in the biosynthesis of bacterial cell-wall peptidoglycan. This is UDP-N-acetylmuramoyl-L-alanyl-D-glutamate--2,6-diaminopimelate ligase from Salmonella choleraesuis (strain SC-B67).